We begin with the raw amino-acid sequence, 216 residues long: Guanylate kinase (216 aa).

The region spanning 12 to 191 (GLLFVISSPS…CVKQVKNILT (180 aa)) is the Guanylate kinase-like domain. Residue 19–26 (SPSGAGKS) coordinates ATP.

Belongs to the guanylate kinase family.

It localises to the cytoplasm. It carries out the reaction GMP + ATP = GDP + ADP. Its function is as follows. Essential for recycling GMP and indirectly, cGMP. This chain is Guanylate kinase, found in Zymomonas mobilis subsp. mobilis (strain ATCC 31821 / ZM4 / CP4).